We begin with the raw amino-acid sequence, 419 residues long: Probable G-protein coupled receptor 63 (419 aa).

The Extracellular segment spans residues 1 to 81; sequence MVFSAVLTAF…AFKSLNLPLQ (81 aa). N-linked (GlcNAc...) asparagine glycans are attached at residues N16, N28, and N62. A helical transmembrane segment spans residues 82–104; sequence ITLSAIMIFILFVSFLGNLVVCL. Residues 105-115 are Cytoplasmic-facing; it reads MVYQKAAMRSA. A helical membrane pass occupies residues 116–138; it reads INILLASLAFADMLLAVLNMPFA. Residues 139–157 lie on the Extracellular side of the membrane; it reads LVTILTTRWIFGKFFCRVS. The chain crosses the membrane as a helical span at residues 158 to 177; sequence AMFFWLFVIEGVAILLIISI. The Cytoplasmic segment spans residues 178 to 196; sequence DRFLIIVQRQDKLNPYRAK. Residues 197–216 traverse the membrane as a helical segment; it reads VLIAVSWATSFCVAFPLAVG. Residues 217–240 are Extracellular-facing; sequence NPDLQIPSRAPQCVFGYTTNPGYQ. Residues 241–263 traverse the membrane as a helical segment; sequence AYVILISLISFFIPFLVILYSFM. The Cytoplasmic segment spans residues 264-315; the sequence is GILNTLRHNALRIHSYPEGICLSQASKLGLMSLQRPFQMSIDMGFKTRAFTT. Residues 316 to 338 traverse the membrane as a helical segment; that stretch reads ILILFAVFIVCWAPFTTYSLVAT. Residues 339-352 lie on the Extracellular side of the membrane; sequence FSKHFYYQHNFFEI. A helical membrane pass occupies residues 353–375; sequence STWLLWLCYLKSALNPLIYYWRI. Topologically, residues 376-419 are cytoplasmic; it reads KKFHDACLDMMPKSFKFLPQLPGHTKRRIRPSAVYVCGEHRTVV.

This sequence belongs to the G-protein coupled receptor 1 family. In terms of tissue distribution, expressed in brain; detected in the frontal cortex, with lower levels in the thalamus, caudate, hypothalamus and midbrain.

It is found in the cell membrane. Orphan receptor. May play a role in brain function. The protein is Probable G-protein coupled receptor 63 (GPR63) of Homo sapiens (Human).